Consider the following 397-residue polypeptide: Tryptophan synthase beta chain (397 aa).

Lys87 bears the N6-(pyridoxal phosphate)lysine mark.

The protein belongs to the TrpB family. Tetramer of two alpha and two beta chains. Requires pyridoxal 5'-phosphate as cofactor.

The enzyme catalyses (1S,2R)-1-C-(indol-3-yl)glycerol 3-phosphate + L-serine = D-glyceraldehyde 3-phosphate + L-tryptophan + H2O. It functions in the pathway amino-acid biosynthesis; L-tryptophan biosynthesis; L-tryptophan from chorismate: step 5/5. Functionally, the beta subunit is responsible for the synthesis of L-tryptophan from indole and L-serine. The protein is Tryptophan synthase beta chain of Enterobacter sp. (strain 638).